Here is a 595-residue protein sequence, read N- to C-terminus: Adenine deaminase (595 aa).

The protein belongs to the metallo-dependent hydrolases superfamily. Adenine deaminase family. Homodimer. The cofactor is Mn(2+).

It catalyses the reaction adenine + H2O + H(+) = hypoxanthine + NH4(+). This is Adenine deaminase from Serratia proteamaculans (strain 568).